Consider the following 347-residue polypeptide: Calcium homeostasis modulator protein 3 (347 aa).

At 1–20 (MDRFRMLFQHLQSSSESVMN) the chain is on the cytoplasmic side. The segment at 9-36 (QHLQSSSESVMNGICLLLAAVTVKIYSS) is central pore. A helical transmembrane segment spans residues 21 to 36 (GICLLLAAVTVKIYSS). Residues 37 to 48 (LDFNCPCLERYN) are Extracellular-facing. Cystine bridges form between Cys41–Cys126 and Cys43–Cys157. A helical transmembrane segment spans residues 49-71 (ALYGLGLLLTPPLALFLCGLLVN). Residues 72–98 (RQSVLMVEEWRRPAGHRRKDLGIIRYM) lie on the Cytoplasmic side of the membrane. Cys99 is lipidated: S-palmitoyl cysteine. Residues 99-124 (CSSVLQRALAAPLVWILLALLDGKCF) traverse the membrane as a helical segment. The Extracellular segment spans residues 125–176 (VCAFSNSVDPEKFLDFANMTPRQVQLFLAKVPCKEDELVKNSPARKAVSRYL). Asn142 carries N-linked (GlcNAc...) asparagine glycosylation. A helical transmembrane segment spans residues 177-202 (RCLSQAIGWSITLLVIVVAFLARCLR). Residues Cys200 and Cys204 are each lipidated (S-palmitoyl cysteine). At 203-347 (PCFDQTVFLQ…GTKLCHQLNV (145 aa)) the chain is on the cytoplasmic side. The tract at residues 265–290 (GGIPESQESSEPPELREDRDSGNGKA) is disordered. Positions 277–286 (PELREDRDSG) are enriched in basic and acidic residues.

Belongs to the CALHM family. In terms of assembly, associates with CALHM1 as a pore-forming subunit in a hetero-hexameric channel complex. Post-translationally, N-glycosylated. In terms of processing, palmitoylated by ZDHHC3 and ZDHHC15. Palmitoylation positively regulates CALHM1:CALHM3 channel conductance. Expressed in taste bud cells.

The protein resides in the basolateral cell membrane. It carries out the reaction ATP(in) = ATP(out). The enzyme catalyses Ca(2+)(in) = Ca(2+)(out). It catalyses the reaction Na(+)(in) = Na(+)(out). The catalysed reaction is K(+)(in) = K(+)(out). It carries out the reaction chloride(in) = chloride(out). Functionally, pore-forming subunit of gustatory voltage-gated ion channels required for sensory perception of sweet, bitter and umami tastes. With CALHM1 forms a fast-activating voltage-gated ATP-release channel in type II taste bud cells, ATP acting as a neurotransmitter to activate afferent neural gustatory pathways. Acts both as a voltage-gated and calcium-activated ion channel: mediates neuronal excitability in response to membrane depolarization and low extracellular Ca(2+) concentration. Has poor ion selectivity and forms a wide pore (around 14 Angstroms) that mediates permeation of small ions including Ca(2+), Na(+), K(+) and Cl(-), as well as larger ions such as ATP(4-). The polypeptide is Calcium homeostasis modulator protein 3 (Mus musculus (Mouse)).